Reading from the N-terminus, the 109-residue chain is MEEAKGPVKHVLLASFKDGVSPEKIEELIKGYANLVNLIEPMKAFHWGKDVSIENLHQGYTHIFESTFESKEAVAEYIAHPAHVEFATIFLGSLDKVLVIDYKPTSVSL.

The 95-residue stretch at 8-102 folds into the Stress-response A/B barrel domain; the sequence is VKHVLLASFK…SLDKVLVIDY (95 aa). Residues Val-36, Ile-39, Glu-40, and Met-42 each contribute to the Mg(2+) site.

Homodimer. Requires Mg(2+) as cofactor.

In terms of biological role, heat stable protein involved in defense against fungal pathogens. Possesses antifungal activity against diverse pathogenic fungi. Possesses antimicrobial activity. Possesses ribonuclease activity. This Arabidopsis thaliana (Mouse-ear cress) protein is Stress-response A/B barrel domain-containing protein HS1.